Consider the following 642-residue polypeptide: ATP-dependent rRNA helicase spb4 (642 aa).

The Q motif motif lies at 14–42 (WDGVTPALSEWVLDAVASMGFTRMTPVQA). Residues 45-250 (IPLFMAHKDV…RVGLRNPVKV (206 aa)) form the Helicase ATP-binding domain. Residue 58 to 65 (AVTGSGKT) coordinates ATP. Residues 198–201 (DEAD) carry the DEAD box motif. One can recognise a Helicase C-terminal domain in the interval 284–438 (AIKHILYSLE…TLTITDADAA (155 aa)). Positions 522 to 625 (AYKDKQREKR…RLLRRAAKDK (104 aa)) form a coiled coil. Composition is skewed to basic and acidic residues over residues 527 to 536 (QREKRRKEQV) and 577 to 628 (AKQA…KESK). The disordered stretch occupies residues 527–642 (QREKRRKEQV…DDDDEFKGFD (116 aa)). Residues 632–642 (GDDDDEFKGFD) are compositionally biased toward acidic residues.

Belongs to the DEAD box helicase family. DDX55/SPB4 subfamily. In terms of assembly, component of pre-60S ribosomal complexes.

It is found in the nucleus. It localises to the nucleolus. It carries out the reaction ATP + H2O = ADP + phosphate + H(+). ATP-binding RNA helicase involved in the biogenesis of 60S ribosomal subunits. Binds 90S pre-ribosomal particles and dissociates from pre-60S ribosomal particles after processing of 27SB pre-rRNA. Required for the normal formation of 18S rRNA through the processing of pre-rRNAs at sites A0, A1 and A2, and the normal formation of 25S and 5.8S rRNAs through the processing of pre-rRNAs at sites C1 and C2. In Aspergillus niger (strain ATCC MYA-4892 / CBS 513.88 / FGSC A1513), this protein is ATP-dependent rRNA helicase spb4.